The chain runs to 305 residues: Undecaprenyl-diphosphatase (305 aa).

A run of 8 helical transmembrane segments spans residues 18-38 (GVTE…PALV), 55-75 (YLAF…VFFW), 103-123 (WLIV…EQLF), 130-150 (PVPA…GEVL), 187-207 (GVLI…RSGI), 225-245 (FSFL…IPEL), 246-266 (FGPL…ASFV), and 284-304 (LTPF…WLAL).

Belongs to the UppP family.

The protein localises to the cell membrane. It catalyses the reaction di-trans,octa-cis-undecaprenyl diphosphate + H2O = di-trans,octa-cis-undecaprenyl phosphate + phosphate + H(+). Catalyzes the dephosphorylation of undecaprenyl diphosphate (UPP). Confers resistance to bacitracin. This chain is Undecaprenyl-diphosphatase, found in Mycobacterium avium (strain 104).